The sequence spans 247 residues: tRNA (guanine-N(7)-)-methyltransferase (247 aa).

S-adenosyl-L-methionine-binding positions include Gly-70, Glu-93 to Ile-94, Asn-128 to Ala-129, and Leu-148. Asp-151 is a catalytic residue. Ser-226 to Glu-228 is a binding site for S-adenosyl-L-methionine.

It belongs to the class I-like SAM-binding methyltransferase superfamily. TrmB family.

The protein resides in the nucleus. The catalysed reaction is guanosine(46) in tRNA + S-adenosyl-L-methionine = N(7)-methylguanosine(46) in tRNA + S-adenosyl-L-homocysteine. It participates in tRNA modification; N(7)-methylguanine-tRNA biosynthesis. Functionally, catalyzes the formation of N(7)-methylguanine at position 46 (m7G46) in tRNA. The polypeptide is tRNA (guanine-N(7)-)-methyltransferase (Drosophila pseudoobscura pseudoobscura (Fruit fly)).